The following is a 670-amino-acid chain: ATP-dependent RNA helicase DDX18 (670 aa).

Composition is skewed to polar residues over residues 31 to 42 (SNLTLSETQNGD) and 83 to 105 (VTKS…SSNS). Residues 31–169 (SNLTLSETQN…ESEVPSLPLG (139 aa)) form a disordered region. Residues 117–154 (MVNDAEPDTKKAKTENKGKSEEESAETTKETENNVEKP) show a composition bias toward basic and acidic residues. The short motif at 179–207 (FASLCNLVNENTLKAIKEMGFTNMTEIQH) is the Q motif element. The 176-residue stretch at 210–385 (IRPLLEGRDL…RISLKKEPLY (176 aa)) folds into the Helicase ATP-binding domain. An ATP-binding site is contributed by 223-230 (AKTGSGKT). The DEAD box signature appears at 333–336 (DEAD). The 171-residue stretch at 399–569 (GLEQGYVVCP…DIQSQLEKLI (171 aa)) folds into the Helicase C-terminal domain.

This sequence belongs to the DEAD box helicase family. DDX18/HAS1 subfamily. In terms of assembly, interacts with NOL8; the interaction is RNA-dependent. Interacts with PRC2 complex components EZH2, SUZ2 and JARID2; these interactions prevent deposition of the repressive H3K27me3 mark onto rDNA in pluripotent cells.

The protein resides in the nucleus. The protein localises to the nucleolus. It localises to the chromosome. It catalyses the reaction ATP + H2O = ADP + phosphate + H(+). Its function is as follows. ATP-dependent RNA helicase that plays a role in the regulation of R-loop homeostasis in both endogenous R-loop-prone regions and at sites of DNA damage. At endogenous loci such as actively transcribed genes, may act as a helicase to resolve the formation of R-loop during transcription and prevent the interference of R-loop with DNA-replication machinery. Also participates in the removal of DNA-lesion-associated R-loop. Plays an essential role for establishing pluripotency during embryogenesis and for pluripotency maintenance in embryonic stem cells. Mechanistically, prevents the polycomb repressive complex 2 (PRC2) from accessing rDNA loci and protects the active chromatin status in nucleolus. This is ATP-dependent RNA helicase DDX18 (DDX18) from Homo sapiens (Human).